The primary structure comprises 329 residues: MPPSAPDDDRDAPAPPHPQIGAYLDALKFERKLSQHTLASYARELAVLQQLGARFAAGIDLMRLQPHHIRRMMAQLHGGGLSGRSIARALSAWRGWYQWLALRDAAVTANPVDGIRAPKSPKRLPKALSVEQAVALMEQLPGDDPEAVRDRAVNELFYSCGLRLSELVGLDLRHAQAGDYASASWLDLEAREVTVLGKGNKRRTVPVGSKAAEALAAWLAVRPQLAQPDAAPEDAHALFLSARGKRLAQRQIQTRMKRNAIAAGVPADVHPHVLRHSFATHMLQSSGDLRAVQELLGHASIASTQVYTSLDFQHLAKIYDQAHPRAKKK.

The Core-binding (CB) domain maps to Ala-14–Ala-101. In terms of domain architecture, Tyr recombinase spans Arg-123 to Asp-320. Active-site residues include Arg-163, Lys-198, His-272, Arg-275, and His-298. Tyr-307 acts as the O-(3'-phospho-DNA)-tyrosine intermediate in catalysis.

It belongs to the 'phage' integrase family. XerC subfamily. In terms of assembly, forms a cyclic heterotetrameric complex composed of two molecules of XerC and two molecules of XerD.

The protein localises to the cytoplasm. Its function is as follows. Site-specific tyrosine recombinase, which acts by catalyzing the cutting and rejoining of the recombining DNA molecules. The XerC-XerD complex is essential to convert dimers of the bacterial chromosome into monomers to permit their segregation at cell division. It also contributes to the segregational stability of plasmids. This chain is Tyrosine recombinase XerC 1 (xerC1), found in Ralstonia nicotianae (strain ATCC BAA-1114 / GMI1000) (Ralstonia solanacearum).